Consider the following 752-residue polypeptide: Complement C2 (752 aa).

The N-terminal stretch at 1–20 is a signal peptide; the sequence is MGPLMVLFCLLFLYPGLADS. 3 Sushi domains span residues 22–86, 87–146, and 149–206; these read PSCP…VCKP, VRCP…VCDN, and GHCP…ICRQ. Cystine bridges form between Cys-24/Cys-64, Cys-51/Cys-84, Cys-89/Cys-131, Cys-117/Cys-144, Cys-151/Cys-191, and Cys-177/Cys-204. N-linked (GlcNAc...) asparagine glycosylation is present at Asn-29. Asn-112 is a glycosylation site (N-linked (GlcNAc...) asparagine). One can recognise a VWFA domain in the interval 254-452; it reads NLYLLLDCSQ…KALHQVFEHM (199 aa). The MIDAS-like motif motif lies at 260–264; sequence DCSQS. The Mg(2+) site is built by Ser-262 and Ser-264. 2 residues coordinate Mn(2+): Ser-262 and Ser-264. N-linked (GlcNAc...) asparagine glycans are attached at residues Asn-290 and Asn-333. Residue Thr-337 coordinates Mg(2+). Thr-337 is a binding site for Mn(2+). Disulfide bonds link Cys-463-Cys-581, Cys-492-Cys-508, and Cys-584-Cys-600. The Peptidase S1 domain occupies 464-744; that stretch reads GVGNMSANAS…MQPWLRQHLG (281 aa). Residues Asn-467 and Asn-471 are each glycosylated (N-linked (GlcNAc...) asparagine). Catalysis depends on charge relay system residues His-507 and Asp-561. An N-linked (GlcNAc...) asparagine glycan is attached at Asn-621. Disulfide bonds link Cys-638/Cys-665 and Cys-675/Cys-705. N-linked (GlcNAc...) (complex) asparagine glycosylation is present at Asn-651. Ser-679 acts as the Charge relay system in catalysis.

The protein belongs to the peptidase S1 family. As to quaternary structure, serine protease component of the C3 convertase, also named C4bC2b, composed of the serine protease complement C2b and complement C4b. Serine protease component of the C5 convertase, also named C4bC2bC3b, composed of the serine protease complement C2b, complement C3b, as well as complement C4b. In terms of assembly, (Microbial infection) Interacts with Schistosoma haematobium TOR (via N-terminal extracellular domain). This results in inhibition of the classical and lectin pathway of complement activation, probably due to interference with binding of C2a to C4b such that C3 convertase cannot be formed. This infers resistance to complement-mediated cell lysis, allowing parasite survival and infection. Requires Mg(2+) as cofactor. Mn(2+) is required as a cofactor. Cleaved and activated by different proteases depending on the complement pathway to generate complement C2a and serine protease complement C2b chains. Cleaved and activated by C1S following activation by the classical complement system. Cleaved and activated by MASP2 following activation by the lectin complement system. Cleaved and activated by GZMK following activation by the GZMK complement system.

It localises to the secreted. It is found in the cell surface. The enzyme catalyses Selective cleavage of Arg-|-Ser bond in complement component C3 alpha-chain to form C3a and C3b, and Arg-|-Xaa bond in complement component C5 alpha-chain to form C5a and C5b.. Functionally, precursor of the catalytic component of the C3 and C5 convertase complexes, which are part of the complement pathway, a cascade of proteins that leads to phagocytosis and breakdown of pathogens and signaling that strengthens the adaptive immune system. Component C2 is part of the classical, lectin and GZMK complement systems. In terms of biological role, catalytic component of the complement C3 and C5 convertase complexes. Following complement activation, recruited to the surface of pathogens by complement C4b opsonin to form the C3 convertase, or C3b and C4b opsonins to form the C5 convertase. As part of the C3 convertase, cleaves and activate C3 into C3a anaphylatoxin and C3b opsonin, the next components of the complement pathways. As part of the C5 convertase, cleaves and activate C5 into C5a anaphylatoxin and C5b component of the membrane attack complex. This Homo sapiens (Human) protein is Complement C2.